Consider the following 1561-residue polypeptide: MRQFNISVIGLSGTEKDRGQVGVGKSCLCNRFMRPMADDYFIDHISVLSQSDFSGRIVNNDHFLYWGDVRKTTEEGVEYQFNIIEQTEFMDDSTFQAFKVGKMDPYSKRCTATKVFSAEKLMYICKNQLGIEKEYEQKVMPDGRLSIDGFVVVFDVSPVPNRSVEKQVEFVQNVIATILKNKKPLVLVTTKNDDAYELYVREAEKISQRKDYKSTVQLIETSAHESINIDLAFLLLAQMIDKVKNRVKIISYQESAKSRKELLDTRSEAVTRLIRNQITDYHVLWSQGSKMLSQYREWNEFLNIFGHEAGQKLFRRHMKKLRDDHLNKKLHQYLDKFALALEYLLPDIGALNISDDDAWECARNYLQNHIEFEQYFFECPQASWTELVDMDEAEDEARIPFDVLETSEAETVFRNYLNSVQQDKKKIGWKQQFKMLLEESGFVTPGKQLSEVRVLFMGRECFEALSEHDCQQIYDIHQDDIIEKSKQNFVELLLEHAQYFLQFKNVDNITQEDVRQITDVIQEDSRYKMLDRLDQERRLMLVQHLRFIHCPIRDHCPFFYNCVDSLIEEVLSDKSASNHKTPSGGGWKSSGSGSDRTLNLLIVGSEHLASDLLNDIRICTGSKGEYIYENQTYYLNYRIANGDMEAFKAIDVYSSGLICVYSNQQSFETLKDNLERTLLCNLELEDKFENLPIVLVYQPQDLKENEVEYLRNEGMRLSEMLHCDFIDHTQNHQKYVYDILNIVILSLKLTEMKSYEPYPSNHTDLRILCCIFCGDQYDIENIVQPLVEESTLVKANEHSIIVDVFIGDAKRRVEFILSSYHGTSQYRDELIHGYIYFYSTKRRSSLANLSILAAQNANIPLQIIAVTESGGVNAFFNSDICQFLITEGNAVADRFKGSFMTFSADQYVKFAFYNPFLKTAWDNKYEVENLHVEESITLDSGEGTLENSVNQMPRPPPRHESYMLSNTLGTDGSGSENYEMAPTRSLNSLNEERDISLDEIYDDNEKPKHLHQKWLEDKSDGRRNMNKNLIWNNFSGSTHAYTTGRRHIDSNLNKIRPKGPSQTLKVGEAPSRNCPAMSSSTFTLPTQQPGKLNMKNFQLVSDAVAKMNFTGSGSGSGSGSGSGSTGLGLGLGSGSGCMGDSFLEPVDKDGKRYDHAQLDGEDEDSEELAEYEQIYENEDCTESDSCASSTERRVRQQNAYYKASKKPVAAKKQKKKKVAIPVQTPRVPPFGSYVSPPEIPLHYQRMAVGGSGPEKPEPCVPEFMKSDKSPEYSMVPELAGAGIFGAENLPEYNMNQAKCLKDFEKLEKRRIKEETARQRKLQEKEKEQEKKLKRKLKQNAKGLVESAEAQFGKLMITSEQGEIPIFLNKCVEFIEKEGLDSEGIYRVPGSRAHVDMLFQRFEEDTNTEIDALDIPVNAVATALKDFFSKRLPPLFSKDIIKELEEIAGSRGVGNSKLNVEVKTDRSCRLIALKSLLQKLPPINFAILKYIFQHFVHVSDNSKLNSMDSKNLAICWWPTLIPIDFTDMGHFEQLRPYLEDIVQTMIDQFPYLFCGKDAFVMV.

FF domains lie at 252–320 (YQES…HMKK), 365–419 (YLQN…YLNS), 426–480 (KIGW…HQDD), and 482–547 (IEKS…HLRF). The pG1 pseudoGTPase domain occupies 592-765 (SGSDRTLNLL…EPYPSNHTDL (174 aa)). Residues 766-926 (RILCCIFCGD…LKTAWDNKYE (161 aa)) form the pG2 pseudoGTPase domain. 5 positions are modified to phosphoserine: S973, S975, S985, S988, and S996. The interval 1054-1074 (KIRPKGPSQTLKVGEAPSRNC) is disordered. The 204-residue stretch at 1349–1552 (AQFGKLMITS…TMIDQFPYLF (204 aa)) folds into the Rho-GAP domain.

With respect to regulation, negatively regulated by integrin, bsk and Src/Src64B. In terms of biological role, GTPase-activating protein (GAP) for RhoA/Rho1 that plays an essential role in the stability of dorsal branches of mushroom body (MB) neurons. The MB neurons are the center for olfactory learning and memory. Acts by converting RhoA/Rho1 to an inactive GDP-bound state, leading to repress the RhoA/Rho1-Drok-MRLC signaling pathway thereby maintaining axon branch stability. This is Rho GTPase-activating protein 190 (RhoGAPp190) from Drosophila melanogaster (Fruit fly).